A 125-amino-acid polypeptide reads, in one-letter code: Holo-[acyl-carrier-protein] synthase (125 aa).

Residues Asp8 and Glu57 each coordinate Mg(2+).

Belongs to the P-Pant transferase superfamily. AcpS family. It depends on Mg(2+) as a cofactor.

Its subcellular location is the cytoplasm. The enzyme catalyses apo-[ACP] + CoA = holo-[ACP] + adenosine 3',5'-bisphosphate + H(+). Functionally, transfers the 4'-phosphopantetheine moiety from coenzyme A to a Ser of acyl-carrier-protein. The sequence is that of Holo-[acyl-carrier-protein] synthase from Blochmanniella pennsylvanica (strain BPEN).